An 88-amino-acid polypeptide reads, in one-letter code: Small ribosomal subunit protein bS16 (88 aa).

The protein belongs to the bacterial ribosomal protein bS16 family.

The polypeptide is Small ribosomal subunit protein bS16 (Geotalea uraniireducens (strain Rf4) (Geobacter uraniireducens)).